Reading from the N-terminus, the 442-residue chain is MNIINILDCDSILCILPNLPDADKIKFISCCRDLYKIKPIIKFDDYYHYANMDKLGMVNQCRNLIHIITDDNINQLTMKNIRYLKLYTQRQFIKHKLPINITKLEISRIFEQDIGPFIPDALEELILCDYDKPIRKFLPPTLKTLKFIHTHKNVIKHQIAPNVTNLALGDYDGSLGKWLPNNLKYLDVGKFFRGKIGLNIPTTVETLILGDLFNSSINSLRNNIRVLKLGNSFNKPIDILPELLEELYIGRGFNSEITYLPKRLIRLEFDNECIFDHPINVLPNSLRIFKLGCFFNQSIEKCLPNGLIKLKFGDYFNKPIQKTVFSGCLFKTKKFIPDSVRVLKFGMYFNQNVNGGLPIGITKIVLGSHYTRAIRKIPASAKHIQLEVGFRMASMQHWNNITHFKIYYSQYEYYKDVLPEHEIVNNKTKGLTNYKLIKIKKN.

FNIP repeat units lie at residues 213-252 (FNSS…IGRG), 253-294 (FNSE…LGCF), and 295-348 (FNQS…FGMY).

The chain is Putative FNIP repeat-containing protein L170 from Acanthamoeba polyphaga mimivirus (APMV).